Here is a 517-residue protein sequence, read N- to C-terminus: MSPLALVSVSDKKNIIPFCKELIEQFNYKILSSGGTAKHLIDAKIPVIKVADFTNSPEILGGRVKTLHPKIHGGILAKRTDEEHKKDVETNNLELIDLVVVNLYPFKKTVDQGAQWEDAIENIDIGGPSMIRSAAKNHKDVSVLVDPSQYQNFLEESKKGELKDAYKAKLALEAFQHTADYDTAISNWIRKERDLQSSKYIESYPLIKTLRYGENPHQKAFWYGLSNIGWNSAEQLQGKDLSYNNLLDLESALSTVLEFGYTEKDELKTDMFASVILKHNNPCGASISNSASKAFLNALECDSVSAFGGIVAFNSNVDSDTAVHLKDIFLECVVAPSFDEEALEILKVKKNLRILKFSKDQLPKKNQNSTKSIMGGLLVQDTDDSQEKTEDWISVTNKNANNQANLDLNFAWKICKHVKSNAIVIAKDQKTIGIGAGQMNRVGAAKIALKAAGSLCSDAVLASDGFFPFADTVELAHEYGIKAIIQPGGSLRDQESIDMCNLKGISMIFTQKRHFLH.

The MGS-like domain maps to 1 to 145 (MSPLALVSVS…KNHKDVSVLV (145 aa)).

The protein belongs to the PurH family.

The catalysed reaction is (6R)-10-formyltetrahydrofolate + 5-amino-1-(5-phospho-beta-D-ribosyl)imidazole-4-carboxamide = 5-formamido-1-(5-phospho-D-ribosyl)imidazole-4-carboxamide + (6S)-5,6,7,8-tetrahydrofolate. The enzyme catalyses IMP + H2O = 5-formamido-1-(5-phospho-D-ribosyl)imidazole-4-carboxamide. It functions in the pathway purine metabolism; IMP biosynthesis via de novo pathway; 5-formamido-1-(5-phospho-D-ribosyl)imidazole-4-carboxamide from 5-amino-1-(5-phospho-D-ribosyl)imidazole-4-carboxamide (10-formyl THF route): step 1/1. Its pathway is purine metabolism; IMP biosynthesis via de novo pathway; IMP from 5-formamido-1-(5-phospho-D-ribosyl)imidazole-4-carboxamide: step 1/1. In Prochlorococcus marinus (strain MIT 9301), this protein is Bifunctional purine biosynthesis protein PurH.